The following is a 383-amino-acid chain: Acetylornithine deacetylase (383 aa).

His80 contacts Zn(2+). The active site involves Asp82. Asp112 is a binding site for Zn(2+). Residue Glu144 is part of the active site. Glu145, Glu169, and His355 together coordinate Zn(2+).

The protein belongs to the peptidase M20A family. ArgE subfamily. Homodimer. Zn(2+) serves as cofactor. It depends on Co(2+) as a cofactor. Requires glutathione as cofactor.

The protein localises to the cytoplasm. The enzyme catalyses N(2)-acetyl-L-ornithine + H2O = L-ornithine + acetate. The protein operates within amino-acid biosynthesis; L-arginine biosynthesis; L-ornithine from N(2)-acetyl-L-ornithine (linear): step 1/1. Its function is as follows. Catalyzes the hydrolysis of the amide bond of N(2)-acetylated L-amino acids. Cleaves the acetyl group from N-acetyl-L-ornithine to form L-ornithine, an intermediate in L-arginine biosynthesis pathway, and a branchpoint in the synthesis of polyamines. The polypeptide is Acetylornithine deacetylase (Escherichia coli O127:H6 (strain E2348/69 / EPEC)).